We begin with the raw amino-acid sequence, 507 residues long: ATP synthase subunit alpha (507 aa).

169 to 176 serves as a coordination point for ATP; the sequence is GDRQTGKT.

Belongs to the ATPase alpha/beta chains family. As to quaternary structure, F-type ATPases have 2 components, CF(1) - the catalytic core - and CF(0) - the membrane proton channel. CF(1) has five subunits: alpha(3), beta(3), gamma(1), delta(1), epsilon(1). CF(0) has three main subunits: a(1), b(2) and c(9-12). The alpha and beta chains form an alternating ring which encloses part of the gamma chain. CF(1) is attached to CF(0) by a central stalk formed by the gamma and epsilon chains, while a peripheral stalk is formed by the delta and b chains.

The protein localises to the cell inner membrane. It carries out the reaction ATP + H2O + 4 H(+)(in) = ADP + phosphate + 5 H(+)(out). Produces ATP from ADP in the presence of a proton gradient across the membrane. The alpha chain is a regulatory subunit. The chain is ATP synthase subunit alpha from Magnetococcus marinus (strain ATCC BAA-1437 / JCM 17883 / MC-1).